The sequence spans 390 residues: 1-acyl-sn-glycerol-3-phosphate acyltransferase 2 (390 aa).

Residues 2 to 22 traverse the membrane as a helical segment; the sequence is AMAAAVIVPLGILFFISGLVV. The HXXXXD motif signature appears at 91–96; that stretch reads HRSDID. Transmembrane regions (helical) follow at residues 305–325 and 333–353; these read LAVVVSWACLLTLGAMKFLHW and KGIALSAFGLGIITLCMQILI. The disordered stretch occupies residues 358-390; the sequence is SERSTPAKVAPAKPKDNHQSGPSSQTEVEEKQK.

This sequence belongs to the 1-acyl-sn-glycerol-3-phosphate acyltransferase family.

Its subcellular location is the endoplasmic reticulum membrane. It catalyses the reaction a 1-acyl-sn-glycero-3-phosphate + an acyl-CoA = a 1,2-diacyl-sn-glycero-3-phosphate + CoA. The protein operates within phospholipid metabolism; CDP-diacylglycerol biosynthesis; CDP-diacylglycerol from sn-glycerol 3-phosphate: step 2/3. In terms of biological role, converts lysophosphatidic acid (LPA) into phosphatidic acid by incorporating acyl moiety at the 2 position. The chain is 1-acyl-sn-glycerol-3-phosphate acyltransferase 2 (LPAT2) from Brassica napus (Rape).